A 349-amino-acid chain; its full sequence is Core protein VP7 (349 aa).

Asn193 and Asn287 each carry an N-linked (GlcNAc...) asparagine; by host glycan.

Belongs to the orbivirus VP7 family. As to quaternary structure, homotrimer that assemble in a complex of 260 capsomers on an inner scaffold composed of VP3.

It is found in the virion. In terms of biological role, the VP7 protein is one of the five proteins (with VP1, VP3, VP4, and VP6) which form the inner capsid of the virus. The chain is Core protein VP7 (Segment-7) from Antilocapra americana (Pronghorn).